Reading from the N-terminus, the 210-residue chain is Glycerol-3-phosphate acyltransferase 2 (210 aa).

Transmembrane regions (helical) follow at residues 4–24, 52–72, 73–93, 114–134, 141–161, and 163–183; these read LIMV…PAPY, VGFW…ALAM, AVAN…LMAI, IGIL…CFLI, FPTL…WLGQ, and DMGK…MYIP.

Belongs to the PlsY family. In terms of assembly, probably interacts with PlsX.

It localises to the cell membrane. It carries out the reaction an acyl phosphate + sn-glycerol 3-phosphate = a 1-acyl-sn-glycero-3-phosphate + phosphate. Its pathway is lipid metabolism; phospholipid metabolism. In terms of biological role, catalyzes the transfer of an acyl group from acyl-phosphate (acyl-PO(4)) to glycerol-3-phosphate (G3P) to form lysophosphatidic acid (LPA). This enzyme utilizes acyl-phosphate as fatty acyl donor, but not acyl-CoA or acyl-ACP. This chain is Glycerol-3-phosphate acyltransferase 2, found in Dehalococcoides mccartyi (strain CBDB1).